The primary structure comprises 482 residues: tRNA sulfurtransferase (482 aa).

Positions 61–165 constitute a THUMP domain; the sequence is LTIRDALTRI…DDRLLLIKGR (105 aa). ATP contacts are provided by residues 183 to 184, K265, G287, and Q296; that span reads LI. C344 and C456 are joined by a disulfide. Residues 404 to 482 form the Rhodanese domain; that stretch reads FGPNDVILDI…GFKNVKVYRP (79 aa). C456 serves as the catalytic Cysteine persulfide intermediate.

Belongs to the ThiI family. As to quaternary structure, interacts with IscS.

The protein resides in the cytoplasm. It carries out the reaction [ThiI sulfur-carrier protein]-S-sulfanyl-L-cysteine + a uridine in tRNA + 2 reduced [2Fe-2S]-[ferredoxin] + ATP + H(+) = [ThiI sulfur-carrier protein]-L-cysteine + a 4-thiouridine in tRNA + 2 oxidized [2Fe-2S]-[ferredoxin] + AMP + diphosphate. The enzyme catalyses [ThiS sulfur-carrier protein]-C-terminal Gly-Gly-AMP + S-sulfanyl-L-cysteinyl-[cysteine desulfurase] + AH2 = [ThiS sulfur-carrier protein]-C-terminal-Gly-aminoethanethioate + L-cysteinyl-[cysteine desulfurase] + A + AMP + 2 H(+). It functions in the pathway cofactor biosynthesis; thiamine diphosphate biosynthesis. In terms of biological role, catalyzes the ATP-dependent transfer of a sulfur to tRNA to produce 4-thiouridine in position 8 of tRNAs, which functions as a near-UV photosensor. Also catalyzes the transfer of sulfur to the sulfur carrier protein ThiS, forming ThiS-thiocarboxylate. This is a step in the synthesis of thiazole, in the thiamine biosynthesis pathway. The sulfur is donated as persulfide by IscS. The sequence is that of tRNA sulfurtransferase from Escherichia coli O157:H7.